The primary structure comprises 852 residues: Protein mono-ADP-ribosyltransferase PARP8 (852 aa).

Disordered stretches follow at residues 113–134 (NGEESRQNSTVEEDSEGDNDSE) and 289–310 (SPSYPPPGCGKSKSKLKPEQDG). The span at 123–134 (VEEDSEGDNDSE) shows a compositional bias: acidic residues. Cysteine 332, cysteine 366, cysteine 375, and cysteine 394 each carry ADP-ribosylcysteine. Positions 615-842 (EMTQAPYLEI…QEGGIHKEIL (228 aa)) constitute a PARP catalytic domain. The tract at residues 748 to 775 (QKVSSKDEPASSSKSSNASQSQKKGQQS) is disordered. The segment covering 757–775 (ASSSKSSNASQSQKKGQQS) has biased composition (low complexity).

Belongs to the ARTD/PARP family. Post-translationally, auto-mono-ADP-ribosylated.

The catalysed reaction is L-cysteinyl-[protein] + NAD(+) = S-(ADP-D-ribosyl)-L-cysteinyl-[protein] + nicotinamide + H(+). Functionally, mono-ADP-ribosyltransferase that mediates mono-ADP-ribosylation of target proteins. This Mus musculus (Mouse) protein is Protein mono-ADP-ribosyltransferase PARP8.